Consider the following 127-residue polypeptide: Large ribosomal subunit protein bL17 (127 aa).

Belongs to the bacterial ribosomal protein bL17 family. As to quaternary structure, part of the 50S ribosomal subunit. Contacts protein L32.

The protein is Large ribosomal subunit protein bL17 of Lactobacillus helveticus (strain DPC 4571).